The chain runs to 328 residues: Phosphate acyltransferase (328 aa).

It belongs to the PlsX family. In terms of assembly, homodimer. Probably interacts with PlsY.

It localises to the cytoplasm. The catalysed reaction is a fatty acyl-[ACP] + phosphate = an acyl phosphate + holo-[ACP]. The protein operates within lipid metabolism; phospholipid metabolism. Its function is as follows. Catalyzes the reversible formation of acyl-phosphate (acyl-PO(4)) from acyl-[acyl-carrier-protein] (acyl-ACP). This enzyme utilizes acyl-ACP as fatty acyl donor, but not acyl-CoA. The sequence is that of Phosphate acyltransferase from Staphylococcus aureus (strain MSSA476).